The primary structure comprises 377 residues: Presenilin-associated rhomboid-like protein, mitochondrial (377 aa).

The transit peptide at 1–50 (MALYSWVQRGWRCGQTWAPLLGGGYRELSATQARQLLGRRFNLLLQQKCG) directs the protein to the mitochondrion. Topologically, residues 51–95 (FRKAPRKVEPRRSDTGSSGEAYKRSALIPPLEETVFYPSPYPVRT) are mitochondrial matrix. Residues Ser63 and Ser68 each carry the phosphoserine modification. A helical transmembrane segment spans residues 96–116 (LLKPFFFTVGFTGCAFGSAAI). Residues 117–165 (WQYESLKSRVQSYFDGIKADWLDSIRPQKEGNLRKEINKWWNSLSDGQR) are Mitochondrial intermembrane-facing. A helical membrane pass occupies residues 166 to 186 (TVTGIIAANALVFCLWRVPSL). Over 187–214 (HRTMIRYFTSNPASKVLCSPMLLSTFSH) the chain is Mitochondrial matrix. The chain crosses the membrane as a helical span at residues 215–235 (FSLFHMAANMYVLWSFSTSIV). Residues 236–242 (NILGQEQ) are Mitochondrial intermembrane-facing. Residues 243-263 (FVAVYLSAGVISNFVSYVCKV) traverse the membrane as a helical segment. Residues 264 to 268 (ATGRY) are Mitochondrial matrix-facing. A helical transmembrane segment spans residues 269 to 289 (GPSLGASGAIMTVLAAVCTKI). Catalysis depends on Ser275, which acts as the Nucleophile. Residues 290 to 293 (PEGR) are Mitochondrial intermembrane-facing. The chain crosses the membrane as a helical span at residues 294–314 (LAIIFLPVFTFTAGNALKAII). Topologically, residues 315-331 (AMDTAGMILGWKFFDHA) are mitochondrial matrix. A helical membrane pass occupies residues 332–352 (AHLGGALFGIWYITYGHELIW). His333 is an active-site residue. Residues 353–377 (KNREPLVKIWHEIRTNGPKKGGGSK) are Mitochondrial intermembrane-facing.

It belongs to the peptidase S54 family. As to quaternary structure, interacts with PSEN1 and PSEN2. Binds OPA1. P-beta is proteolytically processed (beta-cleavage) in a PARL-dependent manner.

It localises to the mitochondrion inner membrane. Its subcellular location is the nucleus. The enzyme catalyses Cleaves type-1 transmembrane domains using a catalytic dyad composed of serine and histidine that are contributed by different transmembrane domains.. In terms of biological role, required for the control of apoptosis during postnatal growth. Essential for proteolytic processing of an antiapoptotic form of OPA1 which prevents the release of mitochondrial cytochrome c in response to intrinsic apoptotic signals. Required for the maturation of PINK1 into its 52kDa mature form after its cleavage by mitochondrial-processing peptidase (MPP). Promotes cleavage of serine/threonine-protein phosphatase PGAM5 in damaged mitochondria in response to loss of mitochondrial membrane potential. Mediates differential cleavage of PINK1 and PGAM5 depending on the health status of mitochondria, disassociating from PINK1 and associating with PGAM5 in response to mitochondrial membrane potential loss. Required for processing of CLPB into a form with higher protein disaggregase activity by removing an autoinhibitory N-terminal peptide. Promotes processing of DIABLO/SMAC in the mitochondrion which is required for DIABLO apoptotic activity. Also required for cleavage of STARD7 and TTC19. Promotes changes in mitochondria morphology regulated by phosphorylation of P-beta domain. The chain is Presenilin-associated rhomboid-like protein, mitochondrial from Rattus norvegicus (Rat).